Consider the following 1476-residue polypeptide: MCSIADLDGIGPFSSNPQCGHLSFTLLFEEAVLAAVPLGLCVVLALLRVRQLRLQSPKARRDRLYYAKLTALFLLASVQLVQLIQWTRPSTPKTRASIAIAAVSFASTIVFIGLCHLEHIRSAKPSDLLTLYFVTCIAFDIIRTRTLWIVSGGTAVASTFTVGLVLRLLFALLESRPKTRALQRQYLRESPEARTSLINRLFFWWVNPLLWTGFKRILDPGHLFNLDRHISSSHLFHVSAQRLNDTDLSKSYAVLLLCLREYKWTFLAGVLPRLALTGFTFAQPFLVTRFLSYESNRDARDAGATGTWLIVAYAGVYIGIAISQAGYIHQTFRFITMVRGSLLTLLYHDTMNKGSSAGIDPTSAELTLVSADIEKIQMGLQTMHQAWASFVDICLATWLLERHLGLATIPSVGFSLLCVVFGGGVAVMAGSRQTLWLEAIQKRLGLTSDVINMFKSVKMTALVNISAARVLELRDKEITVSKKFRRCLVFMVSLTYLSNVFAPIIGFTTYTLAPAIHKNNILDSARAFSSLTIFALLTEGVGSFVHSAVNLMLAVSSFERYRTTLLEKHTWHESKKASRRWTLTAPPLLENTDAEQWALEVLAATADAHTPPDDKQVCIQARDTNIGWSSEKIVVQSLSLVVRKREITLVTGPTNSGKSTLLRAMLGEAWIEGPALHRHFDRAAYCDQIPWLANKTIRQNILGGSPVDEDWYETTLQACQLKPDLGRLAQGDQTVVGNEGSRLSGGQRTRVALARAVYSRLDIMLLDDITSGLDPNTTKSIVEALFGKDGLFRRAGQTVVVASNNASFLSLADQVVDLGSGSPKVTRRNVESSSPVTAHVHNQTSPKGSRIDSARGSLDEISVADFRLEEPKREPRRLDSDTSIYMYYVRTVGVVNTAVFLALCMALVFAMVFPSIWVAWWVEANARGETNQLAKYLLVYFFLGVAALIALIGGGSHLMLRMVPRSARILHRALLDAVVVAPVPFMTRNDAGETLNRFSQDLEIIDTDVPLSGFTTLFAFITCIAQAIVVCVSSPFVTAGMVPTLVLVYFIQKFYLRTSPQLRALDLEAKAPLIGHMQETLRGLATIRAFGWAEDYEERNMRLVDESQKPFYQLTCIQRWLGLVLDLVVAGIAILLAIVIVSDKNGGATSGFLGIALTSLVSFGLNLGGFIGGWTGLETALTAVARVKRFSADTAKEDLPEECQTPPTDWPQRGEIVFDDVTASYGPGTTDVLSNVSFRISPGEKIGIIGRTGSGKSSLVSTLSRTLDLISGSILIDSIPLSSLPRDTVRQALINMPQDAFVLHGSIRTNVDPRSRLTDEAITEVLTELGLWPILAPLGGLDADAVSALPAQGLKQLLCFARVLAQPGRVMVLDEATSRLDPEASAKVKQAIMRRSEGRTLLTVAHKIDELDGYDRIMVVDAGKVVAFDTPGAVQGYLSSSSPTSSPTCSSSAAALSSGAHRVAAVGVLGTEAGRA.

5 helical membrane-spanning segments follow: residues 26–46 (LLFEEAVLAAVPLGLCVVLAL), 64–84 (LYYAKLTALFLLASVQLVQLI), 97–117 (SIAIAAVSFASTIVFIGLCHL), 122–142 (SAKPSDLLTLYFVTCIAFDII), and 146–166 (TLWIVSGGTAVASTFTVGLVL). N-linked (GlcNAc...) asparagine glycosylation is present at Asn-244. A run of 4 helical transmembrane segments spans residues 266 to 286 (FLAGVLPRLALTGFTFAQPFL), 302 to 322 (AGATGTWLIVAYAGVYIGIAI), 380 to 400 (LQTMHQAWASFVDICLATWLL), and 409 to 429 (IPSVGFSLLCVVFGGGVAVMA). Positions 274–553 (LALTGFTFAQ…FVHSAVNLML (280 aa)) constitute an ABC transmembrane type-1 1 domain. N-linked (GlcNAc...) asparagine glycosylation is present at Asn-464. The next 2 membrane-spanning stretches (helical) occupy residues 487-507 (CLVFMVSLTYLSNVFAPIIGF) and 533-553 (IFALLTEGVGSFVHSAVNLML). Residues 619-845 (IQARDTNIGW…VTAHVHNQTS (227 aa)) form the ABC transporter 1 domain. An ATP-binding site is contributed by 652–659 (GPTNSGKS). Asn-694, Asn-776, Asn-805, and Asn-842 each carry an N-linked (GlcNAc...) asparagine glycan. The next 5 helical transmembrane spans lie at 898–918 (AVFLALCMALVFAMVFPSIWV), 936–956 (YLLVYFFLGVAALIALIGGGS), 1017–1037 (LFAFITCIAQAIVVCVSSPFV), 1121–1141 (LGLVLDLVVAGIAILLAIVIV), and 1151–1171 (GFLGIALTSLVSFGLNLGGFI). Residues 898 to 1179 (AVFLALCMAL…FIGGWTGLET (282 aa)) enclose the ABC transmembrane type-1 2 domain. The region spanning 1216-1447 (IVFDDVTASY…LSSSSPTSSP (232 aa)) is the ABC transporter 2 domain. Asn-1235 is a glycosylation site (N-linked (GlcNAc...) asparagine). Residue 1250–1257 (GRTGSGKS) participates in ATP binding.

Belongs to the ABC transporter superfamily. ABCC family. Conjugate transporter (TC 3.A.1.208) subfamily.

It localises to the cell membrane. In terms of biological role, ABC-type transporter; part of the gene cluster that mediates the biosynthesis of the antifungal antibiotic FR901469, an inhibitor of beta-1,3-glucansynthase, exerting antifungal activity against the pathogenes Candida albicans and Aspergillus fumigatus. FR901469 is a cyclic depsipeptide containing 12 amino acid residues and a fatty acid chain. Probably involved in the secretion of FR901469. The sequence is that of ABC-type transporter frbG from Dothideomycetidae sp. (strain 11243) (Fungal sp. (strain No.11243)).